The sequence spans 475 residues: Coronin-2B (475 aa).

WD repeat units follow at residues 80–120 (GHQG…LKRN), 130–172 (GHSR…KMID), 174–212 (HTDV…VLQE), 215–258 (CKNH…MPVT), and 260–303 (EEID…PYLT). Residues 431–470 (NELLRMFFKQQEEIRRLKEQLSQRDLLVRQLELELKNLRN) are a coiled coil.

Belongs to the WD repeat coronin family.

The protein localises to the cytoplasm. It localises to the cytoskeleton. May play a role in the reorganization of neuronal actin structure. This Xenopus laevis (African clawed frog) protein is Coronin-2B (coro2b).